Reading from the N-terminus, the 163-residue chain is uncharacterized protein (163 aa).

Residues 1–10 (MGVPRAREGR) are compositionally biased toward basic and acidic residues. Residues 1 to 163 (MGVPRAREGR…WSFTPLRWGS (163 aa)) are disordered.

This is an uncharacterized protein from Homo sapiens (Human).